A 352-amino-acid polypeptide reads, in one-letter code: 7,8-didemethyl-8-hydroxy-5-deazariboflavin synthase (352 aa).

The Radical SAM core domain occupies 35-275; sequence ITFSKNAFIP…EDISIQVPPN (241 aa). [4Fe-4S] cluster contacts are provided by Cys49, Cys53, and Cys56.

Belongs to the radical SAM superfamily. CofG family. As to quaternary structure, consists of two subunits, CofG and CofH. The cofactor is [4Fe-4S] cluster.

The catalysed reaction is 5-amino-5-(4-hydroxybenzyl)-6-(D-ribitylimino)-5,6-dihydrouracil + S-adenosyl-L-methionine = 7,8-didemethyl-8-hydroxy-5-deazariboflavin + 5'-deoxyadenosine + L-methionine + NH4(+) + H(+). It participates in cofactor biosynthesis; coenzyme F0 biosynthesis. Catalyzes the radical-mediated synthesis of 7,8-didemethyl-8-hydroxy-5-deazariboflavin from 5-amino-5-(4-hydroxybenzyl)-6-(D-ribitylimino)-5,6-dihydrouracil. This chain is 7,8-didemethyl-8-hydroxy-5-deazariboflavin synthase, found in Methanococcus maripaludis (strain C6 / ATCC BAA-1332).